Here is a 383-residue protein sequence, read N- to C-terminus: Sulfate adenylyltransferase (383 aa).

Belongs to the sulfate adenylyltransferase family.

It carries out the reaction sulfate + ATP + H(+) = adenosine 5'-phosphosulfate + diphosphate. Its pathway is sulfur metabolism; hydrogen sulfide biosynthesis; sulfite from sulfate: step 1/3. The polypeptide is Sulfate adenylyltransferase (Halothermothrix orenii (strain H 168 / OCM 544 / DSM 9562)).